The primary structure comprises 1925 residues: Methylcytosine dioxygenase tet3-A (1925 aa).

Residues 62 to 103 (SNKKRKRCGVCVPCLRKEPCGACYNCVNRSTSHQICKMRKCE) form a CXXC-type zinc finger. Positions 69, 72, 75, 81, 84, 87, 97, and 102 each coordinate Zn(2+). Disordered regions lie at residues 457–476 (KNAL…QNKK), 630–685 (KSQK…NAVF), 774–812 (GAKD…QNDL), and 833–892 (DFSL…PISH). Over residues 465-476 (SPRQTSWEQNKK) the composition is skewed to polar residues. Positions 665–677 (KPPRKQVQIKKPR) are enriched in basic residues. Residues 777–797 (DSCPTPSTDDASSSSGQGDSA) show a composition bias toward low complexity. Composition is skewed to polar residues over residues 841–856 (APSQ…QISG) and 883–892 (PALSNNPISH). 5 residues coordinate Zn(2+): Cys-982, Cys-984, Cys-1042, His-1068, and Cys-1070. Position 1110 (Arg-1110) interacts with 2-oxoglutarate. Residues Cys-1120, Cys-1122, Cys-1138, Cys-1147, and Cys-1207 each coordinate Zn(2+). Cys-1223 contributes to the 2-oxoglutarate binding site. His-1229 lines the Zn(2+) pocket. His-1231 and Asp-1233 together coordinate Fe cation. His-1265 is a 2-oxoglutarate binding site. Disordered regions lie at residues 1307 to 1364 (SEPA…QTKP), 1474 to 1513 (LADG…KSFN), 1556 to 1600 (SVHS…LPND), and 1722 to 1769 (NWAS…EEEI). Positions 1316–1347 (RQLDAKKAAAEKKKLQKEKLVSPDKTKQEPAD) are enriched in basic and acidic residues. Residues 1350 to 1363 (MCQQNPGVPQQQTK) show a composition bias toward polar residues. Residues 1490–1499 (SYRRSSEVPH) show a composition bias toward basic and acidic residues. 3 stretches are compositionally biased toward polar residues: residues 1502-1513 (SLQNPNSQKSFN), 1556-1572 (SVHS…QTSD), and 1730-1742 (VGNS…SQNH). His-1804 is a Fe cation binding site. 1819–1821 (RIS) is a 2-oxoglutarate binding site. Residues 1837 to 1870 (LALWEAKMKLLAERARVKEEEAARLGIKQEVKSL) are a coiled coil.

It belongs to the TET family. The cofactor is Fe(2+). Zn(2+) is required as a cofactor. Detected in embryo (at protein level). Detected in embryonic head, in developing brain, neural tube and eye.

It localises to the nucleus. The protein resides in the chromosome. It catalyses the reaction a 5-methyl-2'-deoxycytidine in DNA + 2-oxoglutarate + O2 = a 5-hydroxymethyl-2'-deoxycytidine in DNA + succinate + CO2. The catalysed reaction is a 5-hydroxymethyl-2'-deoxycytidine in DNA + 2-oxoglutarate + O2 = a 5-formyl-2'-deoxycytidine in DNA + succinate + CO2 + H2O. It carries out the reaction a 5-formyl-2'-deoxycytidine in DNA + 2-oxoglutarate + O2 = a 5-carboxyl-2'-deoxycytidine in DNA + succinate + CO2 + H(+). Its function is as follows. Dioxygenase that catalyzes the conversion of the modified genomic base 5-methylcytosine (5mC) into 5-hydroxymethylcytosine (5hmC) and plays a key role in epigenetic chromatin reprogramming during embryonic development. Conversion of 5mC into 5hmC probably constitutes the first step in cytosine demethylation. Selectively binds to the promoter region of target genes and contributes to regulate the expression of numerous developmental genes, including pax6, rax, sox9 and six3. May also contribute to the regulation of target genes in ways that do not require its enzyme activity. The sequence is that of Methylcytosine dioxygenase tet3-A from Xenopus laevis (African clawed frog).